The primary structure comprises 372 residues: GTPase Obg (372 aa).

The Obg domain occupies Met1–Leu159. The segment at Leu128–Gly147 is disordered. Residues Ala160–Val334 enclose the OBG-type G domain. GTP contacts are provided by residues Gly166–Ser173, Phe191–Ala195, Asp213–Gly216, Asn284–Asp287, and Ser315–Leu317. Residues Ser173 and Thr193 each coordinate Mg(2+).

It belongs to the TRAFAC class OBG-HflX-like GTPase superfamily. OBG GTPase family. Monomer. The cofactor is Mg(2+).

The protein localises to the cytoplasm. Functionally, an essential GTPase which binds GTP, GDP and possibly (p)ppGpp with moderate affinity, with high nucleotide exchange rates and a fairly low GTP hydrolysis rate. Plays a role in control of the cell cycle, stress response, ribosome biogenesis and in those bacteria that undergo differentiation, in morphogenesis control. The polypeptide is GTPase Obg (Burkholderia mallei (strain NCTC 10247)).